Reading from the N-terminus, the 510-residue chain is NAD(P)H-quinone oxidoreductase subunit 2 A, chloroplastic (510 aa).

13 helical membrane passes run 24–44 (LLLF…GLIL), 57–77 (IPWL…ALLF), 99–119 (IFQF…VEYI), 124–144 (MAIT…MFLC), 149–169 (LITI…LSGY), 183–203 (YLLM…WLYG), 229–249 (ISIA…PAPF), 295–315 (WHLL…LIAI), 323–343 (MLAY…IVGD), 354–374 (YMLF…LFGL), 395–415 (ALSS…AGFF), 418–438 (LYLF…IGLL), and 484–504 (MILC…IIAI).

It belongs to the complex I subunit 2 family. In terms of assembly, NDH is composed of at least 16 different subunits, 5 of which are encoded in the nucleus.

The protein resides in the plastid. The protein localises to the chloroplast thylakoid membrane. It catalyses the reaction a plastoquinone + NADH + (n+1) H(+)(in) = a plastoquinol + NAD(+) + n H(+)(out). The catalysed reaction is a plastoquinone + NADPH + (n+1) H(+)(in) = a plastoquinol + NADP(+) + n H(+)(out). Functionally, NDH shuttles electrons from NAD(P)H:plastoquinone, via FMN and iron-sulfur (Fe-S) centers, to quinones in the photosynthetic chain and possibly in a chloroplast respiratory chain. The immediate electron acceptor for the enzyme in this species is believed to be plastoquinone. Couples the redox reaction to proton translocation, and thus conserves the redox energy in a proton gradient. This is NAD(P)H-quinone oxidoreductase subunit 2 A, chloroplastic from Piper cenocladum (Ant piper).